The primary structure comprises 692 residues: Protein arginine N-methyltransferase 7 (692 aa).

SAM-dependent MTase PRMT-type domains are found at residues 14 to 359 (ENSW…YSLW) and 368 to 692 (AKTV…QEKR).

This sequence belongs to the class I-like SAM-binding methyltransferase superfamily. Protein arginine N-methyltransferase family. PRMT7 subfamily.

Its function is as follows. Essential arginine methyltransferase that can both catalyze the formation of omega-N monomethylarginine (MMA) and symmetrical dimethylarginine (sDMA). Specifically mediates the symmetrical dimethylation of arginine residues in the small nuclear ribonucleoproteins SmD1 and SmD3. The protein is Protein arginine N-methyltransferase 7 (Art7) of Drosophila persimilis (Fruit fly).